A 220-amino-acid polypeptide reads, in one-letter code: Putative O-methyltransferase Mmcs_3995 (220 aa).

Residues Val-47, Glu-69, Gly-71 to Thr-72, Ser-77, Asp-95, and Val-96 each bind S-adenosyl-L-methionine. Residue Asp-143 coordinates substrate. S-adenosyl-L-methionine is bound at residue Asp-145.

It belongs to the class I-like SAM-binding methyltransferase superfamily. Cation-dependent O-methyltransferase family.

The protein is Putative O-methyltransferase Mmcs_3995 of Mycobacterium sp. (strain MCS).